The following is a 299-amino-acid chain: Nucleotide-binding protein glr4163 (299 aa).

18–25 contributes to the ATP binding site; sequence SPAGAGRT.

This sequence belongs to the RapZ-like family.

Functionally, displays ATPase and GTPase activities. The sequence is that of Nucleotide-binding protein glr4163 from Gloeobacter violaceus (strain ATCC 29082 / PCC 7421).